We begin with the raw amino-acid sequence, 137 residues long: Putative pre-16S rRNA nuclease (137 aa).

This sequence belongs to the YqgF nuclease family.

It localises to the cytoplasm. Functionally, could be a nuclease involved in processing of the 5'-end of pre-16S rRNA. The polypeptide is Putative pre-16S rRNA nuclease (Buchnera aphidicola subsp. Schizaphis graminum (strain Sg)).